Here is a 122-residue protein sequence, read N- to C-terminus: Large ribosomal subunit protein uL14c (122 aa).

Belongs to the universal ribosomal protein uL14 family. Part of the 50S ribosomal subunit.

It is found in the plastid. The protein localises to the chloroplast. Functionally, binds to 23S rRNA. In Nandina domestica (Heavenly bamboo), this protein is Large ribosomal subunit protein uL14c.